We begin with the raw amino-acid sequence, 1144 residues long: Probable translation initiation factor IF-2 (1144 aa).

In terms of domain architecture, DOD-type homing endonuclease spans 232-362; sequence FAGVMFGDGS…LSLLLLRFGI (131 aa). The tr-type G domain occupies 551–768; it reads TTETHNFVAN…LIAGLSQKYL (218 aa). Residues 624–628 and 678–681 each bind GTP; these read DTPGH and NKID.

It belongs to the TRAFAC class translation factor GTPase superfamily. Classic translation factor GTPase family. IF-2 subfamily. In terms of processing, this protein undergoes a protein self splicing that involves a post-translational excision of the intervening region (intein) followed by peptide ligation.

In terms of biological role, function in general translation initiation by promoting the binding of the formylmethionine-tRNA to ribosomes. Seems to function along with eIF-2. This is Probable translation initiation factor IF-2 (infB) from Thermococcus kodakarensis (strain ATCC BAA-918 / JCM 12380 / KOD1) (Pyrococcus kodakaraensis (strain KOD1)).